The sequence spans 221 residues: Vesicle-associated membrane protein 722 (221 aa).

The Cytoplasmic portion of the chain corresponds to 1–196 (MAQQSLIYSF…MWFQNMKIKL (196 aa)). The 105-residue stretch at 10–114 (FVARGTVILV…SLNKEFGSKL (105 aa)) folds into the Longin domain. In terms of domain architecture, v-SNARE coiled-coil homology spans 130–190 (KLAKVKAQVS…TQMRRKMWFQ (61 aa)). The helical; Anchor for type IV membrane protein transmembrane segment at 197-217 (IVLAIIIALILIIILSICGGF) threads the bilayer. The Vesicular portion of the chain corresponds to 218-221 (NCGK).

The protein belongs to the synaptobrevin family. In terms of tissue distribution, highly expressed in stems and roots. Detected in flowers and leaves.

It localises to the cell membrane. The protein localises to the early endosome membrane. Functionally, involved in the targeting and/or fusion of transport vesicles to their target membrane. This Arabidopsis thaliana (Mouse-ear cress) protein is Vesicle-associated membrane protein 722.